A 623-amino-acid polypeptide reads, in one-letter code: Pyranose 2-oxidase (623 aa).

An N-terminal signal peptide occupies residues 1 to 28; it reads MSTSSSDPFFNFAKSSFRSAAAQKASAS. Residues 29-38 constitute a propeptide that is removed on maturation; it reads SLPPLPGPDK. His-167 is modified (tele-8alpha-FAD histidine). Residues Gln-448 and His-450 each contribute to the substrate site. The active-site Proton acceptor is His-548. Residue Asn-593 is part of the active site.

Belongs to the GMC oxidoreductase family. As to quaternary structure, homotetramer. Requires FAD as cofactor.

It is found in the periplasm. It catalyses the reaction D-glucose + O2 = 2-dehydro-D-glucose + H2O2. Functionally, catalyzes the oxidation of various aldopyranoses and disaccharides on carbon-2 to the corresponding 2-keto sugars concomitant with the reduction of O(2) to H(2)O(2). Plays an important role in lignin degradation of wood rot fungi by supplying the essential cosubstrate H(2)O(2) for the ligninolytic peroxidases, lignin peroxidase and manganese-dependent peroxidase. The sequence is that of Pyranose 2-oxidase (p2ox) from Peniophora sp. (strain SG) (White-rot fungus).